The primary structure comprises 144 residues: UPF0292 protein MA_4098 (144 aa).

Positions 28–109 (GAVIIVEGKR…KPELQIRNKL (82 aa)) constitute a Toprim domain. Mg(2+)-binding residues include Glu34, Asp78, and Asp80.

The protein belongs to the UPF0292 family. The cofactor is Mg(2+).

The chain is UPF0292 protein MA_4098 from Methanosarcina acetivorans (strain ATCC 35395 / DSM 2834 / JCM 12185 / C2A).